The primary structure comprises 207 residues: Small ribosomal subunit protein uS4c (207 aa).

Positions 92 to 156 (MRLDNILFRL…YQSIITKRIE (65 aa)) constitute an S4 RNA-binding domain.

The protein belongs to the universal ribosomal protein uS4 family. Part of the 30S ribosomal subunit. Contacts protein S5. The interaction surface between S4 and S5 is involved in control of translational fidelity.

The protein localises to the plastid. Its subcellular location is the chloroplast. Functionally, one of the primary rRNA binding proteins, it binds directly to 16S rRNA where it nucleates assembly of the body of the 30S subunit. In terms of biological role, with S5 and S12 plays an important role in translational accuracy. This is Small ribosomal subunit protein uS4c (rps4) from Equisetum arvense (Field horsetail).